Reading from the N-terminus, the 605-residue chain is MVQAPSVYVCGFVERPDAPPKDACLHLDPLTVKSQLPLKKPLPLTVEHLPDAPVGSVFGLYQSRAGLFSAASITSGDFLSLLDSIYHDCDIAQSQRLPLPREPKVEALHAWLPSLSLASLHPDIPQTTADGGKLSFFDHVSICALGRRRGTTAVYGTDLAWVLKHFSDLEPSIAAQIENDANAAKRESGCPEDHPLPLTKLIAKAIDAGFLRNRVETLRQDRGVANIPAESYLKASDAPDLQKPDKALQSPPPASTDPATMLSGNAGEGATACGGSAAAGQDLISVPRNTFMTLLQTNLDNKPPRQTPLPYAAPLPPFSHQAIATAPSYGPGAGAVAPAGGYFTSPGGYYAGPAGGDPGAFLAMDAHTYHPHPHPPPAYFGLPGLFGPPPPVPPYYGSHLRADYVPAPSRSNKRKRDPEEDEEGGGLFPGEDATLYRKDIAGLSKSVNELQHTLQALRRETLSYGHTGVGYCPQQGPCYTHSGPYGFQPHQSYEVPRYVPHPPPPPTSHQAAQAQPPPPGTQAPEAHCVAESTIPEAGAAGNSGPREDTNPQQPTTEGHHRGKKLVQASASGVAQSKEPTTPKAKSVSAHLKSIFCEELLNKRVA.

Catalysis depends on charge relay system residues His48, Ser116, and His139. A disordered region spans residues 235 to 274 (ASDAPDLQKPDKALQSPPPASTDPATMLSGNAGEGATACG). The segment at 281–300 (QDLISVPRNTFMTLLQTNLD) is interaction with pAP. 2 disordered regions span residues 403–432 (DYVP…PGED) and 489–588 (PHQS…KSVS). The Nuclear localization signal motif lies at 410-416 (RSNKRKR). The span at 568–579 (ASASGVAQSKEP) shows a compositional bias: polar residues. Positions 585–605 (KSVSAHLKSIFCEELLNKRVA) are interaction with major capsid protein.

The protein belongs to the herpesviridae capsid scaffolding protein family. In terms of assembly, homomultimer. Interacts with major capsid protein. As to quaternary structure, exists in a monomer-dimer equilibrium with the dimer being the active species. Capsid scaffolding protein is cleaved by assemblin after formation of the spherical procapsid. As a result, the capsid obtains its mature, icosahedral shape. Cleavages occur at two or more sites: release (R-site) and maturation (M-site).

The protein localises to the host cytoplasm. The protein resides in the host nucleus. The enzyme catalyses Cleaves -Ala-|-Ser- and -Ala-|-Ala- bonds in the scaffold protein.. Acts as a scaffold protein by binding major capsid protein in the cytoplasm, inducing the nuclear localization of both proteins. Multimerizes in the nucleus such as major capsid protein forms the icosahedral T=16 capsid. Autocatalytic cleavage releases the assembly protein, and subsequently abolishes interaction with major capsid protein. Cleavages products are evicted from the capsid before or during DNA packaging. Its function is as follows. Protease that plays an essential role in virion assembly within the nucleus. Catalyzes the cleavage of the assembly protein after formation of the spherical procapsid. By that cleavage, the capsid matures and gains its icosahedral shape. The cleavage sites seem to include -Ala-Ser-, -Ala-Ala-, as well as Ala-Thr bonds. Assemblin and cleavages products are evicted from the capsid before or during DNA packaging. In terms of biological role, plays a major role in capsid assembly. Acts as a scaffold protein by binding major capsid protein. Multimerizes in the nucleus such as major capsid protein forms the icosahedral T=16 capsid. Cleaved by assemblin after capsid completion. The cleavages products are evicted from the capsid before or during DNA packaging. This Homo sapiens (Human) protein is Capsid scaffolding protein.